The sequence spans 212 residues: Adenylate kinase (212 aa).

10 to 15 (GAGKGT) provides a ligand contact to ATP. The interval 30 to 59 (STGDMFRAAMANQTEMGRLAKSYIDKGELV) is NMP. AMP-binding positions include Thr31, Arg36, 57 to 59 (ELV), 86 to 89 (GYPR), and Gln93. Positions 127 to 159 (GRIINRKTGETFHKVFNPPVDYKEEDYYQREDD) are LID. ATP-binding positions include Arg128 and 137-138 (TF). 2 residues coordinate AMP: Arg156 and Arg167. Gln195 contacts ATP.

It belongs to the adenylate kinase family. In terms of assembly, monomer.

Its subcellular location is the cytoplasm. It carries out the reaction AMP + ATP = 2 ADP. It participates in purine metabolism; AMP biosynthesis via salvage pathway; AMP from ADP: step 1/1. Catalyzes the reversible transfer of the terminal phosphate group between ATP and AMP. Plays an important role in cellular energy homeostasis and in adenine nucleotide metabolism. This chain is Adenylate kinase, found in Streptococcus pyogenes serotype M12 (strain MGAS2096).